Here is a 1936-residue protein sequence, read N- to C-terminus: Trinucleotide repeat-containing gene 6C protein (1936 aa).

The segment covering 1 to 31 has biased composition (basic and acidic residues); it reads MEEKKKKKQEEKKKKEGAQKKAADQKTKVPE. Disordered stretches follow at residues 1–160, 181–256, 366–412, 439–931, 961–1063, and 1115–1139; these read MEEK…PTYR, PSIT…NSNG, PQES…AMQT, NGSS…IRRK, VIQS…VAFG, and ESTS…KTSG. Residues 34–44 show a composition bias toward polar residues; it reads KTCSSQPQPAG. Over residues 45 to 57 the composition is skewed to low complexity; that stretch reads TSTSTSTSTISSS. Over residues 58-71 the composition is skewed to polar residues; the sequence is NNGKRASASGQQPA. Over residues 76-88 the composition is skewed to basic and acidic residues; sequence LPREVPPRFRQQE. Polar residues-rich tracts occupy residues 100–111 and 183–217; these read PTGTLTSVSPTQ and ITGT…GSAQ. The sufficient for interaction with argonaute family proteins stretch occupies residues 211–1133; it reads MATGSAQGNF…GNAPKKGLQK (923 aa). Residues 218-235 show a composition bias toward low complexity; that stretch reads GNFTGHTKKTNGNNGTNG. Residues 366-393 are compositionally biased toward polar residues; it reads PQESTEPQTSTSQNVSFSAQPQNLNTDG. 3 stretches are compositionally biased toward low complexity: residues 394-408, 439-453, and 469-480; these read PNNT…NPIN, NGSS…SAEG, and GNSNSGFSQGNG. The segment covering 481–498 has biased composition (polar residues); sequence DTVNSALSAKQNGSSSAV. Arg523 is modified (omega-N-methylarginine). Over residues 572–585 the composition is skewed to polar residues; that stretch reads GWESPSVTSQNPTV. Low complexity predominate over residues 594-614; the sequence is SWAKAASSGTTASEGSSDGSG. Over residues 625–636 the composition is skewed to basic and acidic residues; that stretch reads GTGEGRRRDKGI. Residues 654–669 are compositionally biased toward polar residues; the sequence is LSNTGWGQTPVKQNTA. Residues 674–684 show a composition bias toward basic and acidic residues; it reads ESPRSERKNDN. At Ser675 the chain carries Phosphoserine. Polar residues predominate over residues 694–718; the sequence is TQASNSGGKNDGSIMNSTNTSSVSG. Composition is skewed to low complexity over residues 720 to 730 and 750 to 772; these read VNAPPAAVPAN and SISS…SGAA. Polar residues-rich tracts occupy residues 834-866 and 873-888; these read NRSG…TNWG and PQQN…NVSN. At Ser924 the chain carries Phosphoserine. Over residues 964-982 the composition is skewed to low complexity; that stretch reads SSTTTNTTTTTTTTTSNTT. Thr987 carries the post-translational modification Phosphothreonine. Over residues 1021-1035 the composition is skewed to polar residues; sequence ENSWGEPSSPSTLVD. The UBA domain maps to 1140–1185; it reads KQDEAWIMSRLIKQLTDMGFPREPAEEALKSNNMNLDQAMSALLEK. A Phosphoserine modification is found at Ser1218. Disordered stretches follow at residues 1291 to 1312, 1419 to 1658, 1689 to 1732, and 1848 to 1869; these read AAQA…NSSQ, VKQP…PSSS, STWS…PSST, and TSSW…GSSH. Residues 1388 to 1419 adopt a coiled-coil conformation; the sequence is MRQQEQQVARTITNLQQQIQQHQRQLAQALLV. The span at 1421 to 1430 shows a compositional bias: pro residues; that stretch reads QPPPPPPPPH. The tract at residues 1467-1936 is silencing domain; interaction with CNOT1 and PAN3; that stretch reads NTFAPYPLAG…PGDLLSGESL (470 aa). Positions 1496 to 1515 are enriched in polar residues; the sequence is DPSQSQSRLPQWTHPNSMDN. The required for interaction with PABPC1 stretch occupies residues 1578–1624; that stretch reads KSDSDKISNGSSINWPPEFHPGVPWKGLQNIDPENDPDVTPGSVPTG. Residues 1578–1936 form a sufficient for translational repression when tethered to a target mRNA region; that stretch reads KSDSDKISNG…PGDLLSGESL (359 aa). Residues 1588 to 1606 form a PABPC1-interacting motif-2 (PAM2) region; that stretch reads SSINWPPEFHPGVPWKGLQ. Over residues 1623–1633 the composition is skewed to polar residues; the sequence is TGPTINTTIQD. A compositionally biased stretch (low complexity) spans 1641 to 1658; sequence SGGSSPPSSQNATLPSSS. Residues 1689 to 1703 show a composition bias toward polar residues; it reads STWSSGPTSHTQASL. The 68-residue stretch at 1811-1878 folds into the RRM domain; sequence AQKSLHMCVL…HGLVRSDAGH (68 aa). The segment at 1842 to 1936 is interaction with the CCR4-NOT complex; sequence GQALPPTSSW…PGDLLSGESL (95 aa). The span at 1848 to 1865 shows a compositional bias: low complexity; sequence TSSWQSSSASSQPRLSAA.

It belongs to the GW182 family. As to quaternary structure, interacts with one or more of the argonaute family proteins AGO1, AGO2, AGO3 and AGO4. Interacts with PABPC1 and EIF4G1. Interacts with CNOT1; the interaction is direct and mediates the association with the CCR4-NOT complex. Interacts with PAN3; the interaction mediates the association with the PAN complex.

Its function is as follows. Plays a role in RNA-mediated gene silencing by micro-RNAs (miRNAs). Required for miRNA-dependent translational repression of complementary mRNAs by argonaute family proteins. As scaffoldng protein associates with argonaute proteins bound to partially complementary mRNAs and simultaneously can recruit CCR4-NOT and PAN deadenylase complexes. The chain is Trinucleotide repeat-containing gene 6C protein (TNRC6C) from Homo sapiens (Human).